The sequence spans 301 residues: MAFPKMRLMYVCLLVLGALCLYFSMYSLNLFKEQSFVYKKDGNFLKLPDTDCRQTPPFLVLLVTSSHKQLAERMAIRQTWGKERTVKGKQLKTFFLLGTTSSAAETKEVDQESQRHGDIIQKDFLDGYYNLTLKTMMGIEWVHRFCPQAAFVMKTDSDMFINVDYLTELLLKKNRTTRFFTGFLKLNEFPIRQPFSKWFVSKSEYPWDRYPPFCSGTGYVFSGDVASQVYNVSESVPYIKLEDVFVGLCLERLNIRLEELHSQPTFFPGGLRFSVCRFRRIVACHFIKPRTLLDYWQALEN.

At 1-7 (MAFPKMR) the chain is on the cytoplasmic side. Residues 8 to 28 (LMYVCLLVLGALCLYFSMYSL) traverse the membrane as a helical; Signal-anchor for type II membrane protein segment. Residues 29-301 (NLFKEQSFVY…LLDYWQALEN (273 aa)) lie on the Lumenal side of the membrane. N-linked (GlcNAc...) asparagine glycosylation is found at N130, N174, and N231.

The protein belongs to the glycosyltransferase 31 family.

The protein localises to the golgi apparatus membrane. It carries out the reaction a globoside Gb4Cer (d18:1(4E)) + UDP-alpha-D-galactose = a globoside GalGb4Cer (d18:1(4E)) + UDP + H(+). It participates in protein modification; protein glycosylation. Catalyzes the transfer of Gal to GlcNAc-based acceptors with a preference for the core3 O-linked glycan GlcNAc(beta1,3)GalNAc structure. Can use glycolipid LC3Cer as an efficient acceptor. This Pan paniscus (Pygmy chimpanzee) protein is Beta-1,3-galactosyltransferase 5 (B3GALT5).